The primary structure comprises 274 residues: NH(3)-dependent NAD(+) synthetase (274 aa).

46–53 contacts ATP; it reads GISGGQDS. D52 is a Mg(2+) binding site. R140 serves as a coordination point for deamido-NAD(+). T160 is a binding site for ATP. E165 is a Mg(2+) binding site. Residues K173 and D180 each coordinate deamido-NAD(+). Positions 189 and 211 each coordinate ATP. 260–261 serves as a coordination point for deamido-NAD(+); it reads HK.

Belongs to the NAD synthetase family. In terms of assembly, homodimer.

It catalyses the reaction deamido-NAD(+) + NH4(+) + ATP = AMP + diphosphate + NAD(+) + H(+). Its pathway is cofactor biosynthesis; NAD(+) biosynthesis; NAD(+) from deamido-NAD(+) (ammonia route): step 1/1. In terms of biological role, catalyzes the ATP-dependent amidation of deamido-NAD to form NAD. Uses ammonia as a nitrogen source. This Streptococcus uberis (strain ATCC BAA-854 / 0140J) protein is NH(3)-dependent NAD(+) synthetase.